Reading from the N-terminus, the 214-residue chain is Histidine biosynthesis bifunctional protein HisIE (214 aa).

The tract at residues Met1–Thr125 is phosphoribosyl-AMP cyclohydrolase. The tract at residues Leu126–Arg214 is phosphoribosyl-ATP pyrophosphohydrolase.

The protein in the N-terminal section; belongs to the PRA-CH family. This sequence in the C-terminal section; belongs to the PRA-PH family.

The protein resides in the cytoplasm. The enzyme catalyses 1-(5-phospho-beta-D-ribosyl)-ATP + H2O = 1-(5-phospho-beta-D-ribosyl)-5'-AMP + diphosphate + H(+). It carries out the reaction 1-(5-phospho-beta-D-ribosyl)-5'-AMP + H2O = 1-(5-phospho-beta-D-ribosyl)-5-[(5-phospho-beta-D-ribosylamino)methylideneamino]imidazole-4-carboxamide. It functions in the pathway amino-acid biosynthesis; L-histidine biosynthesis; L-histidine from 5-phospho-alpha-D-ribose 1-diphosphate: step 2/9. The protein operates within amino-acid biosynthesis; L-histidine biosynthesis; L-histidine from 5-phospho-alpha-D-ribose 1-diphosphate: step 3/9. This chain is Histidine biosynthesis bifunctional protein HisIE, found in Thermosynechococcus vestitus (strain NIES-2133 / IAM M-273 / BP-1).